Consider the following 527-residue polypeptide: Protein IQ-DOMAIN 4 (527 aa).

The tract at residues 13–90 (CLSPGKDKKN…PPSPPPPPPA (78 aa)) is disordered. Basic and acidic residues predominate over residues 17-26 (GKDKKNQKPE). Residues 63–90 (PYPPPPPLPDFAPQPLLPPPSPPPPPPA) show a composition bias toward pro residues. The region spanning 147 to 175 (EETAAIKIQNAYRCYTARRTLRALRGMAR) is the IQ domain. A calmodulin-binding region spans residues 256-273 (RSVNRKEASVRRERALAY). Residues 323–527 (VSVKSSLKRE…EKKRRNGGSS (205 aa)) are disordered. Residues 335–360 (IKSSPARSKTQKSASQSSIQWPVNND) show a composition bias toward polar residues. Residues 361–370 (TKSRKIEVTN) are compositionally biased toward basic and acidic residues. Polar residues-rich tracts occupy residues 399-422 (LDNT…NAQT) and 437-455 (NTKT…NLAN). Positions 471–481 (PKKEVVADKKK) are enriched in basic and acidic residues. The Nuclear localization signal signature appears at 478–485 (DKKKPPQM).

The protein belongs to the IQD family. As to quaternary structure, binds to multiple calmodulin (CaM) in the presence of Ca(2+) and CaM-like proteins.

It is found in the nucleus. Its subcellular location is the nucleolus. Its function is as follows. May be involved in cooperative interactions with calmodulins or calmodulin-like proteins. Recruits calmodulin proteins to microtubules, thus being a potential scaffold in cellular signaling and trafficking. May associate with nucleic acids and regulate gene expression at the transcriptional or post-transcriptional level. The chain is Protein IQ-DOMAIN 4 from Arabidopsis thaliana (Mouse-ear cress).